A 499-amino-acid chain; its full sequence is Maturase K (499 aa).

The protein belongs to the intron maturase 2 family. MatK subfamily.

Its subcellular location is the plastid. It localises to the chloroplast. Functionally, usually encoded in the trnK tRNA gene intron. Probably assists in splicing its own and other chloroplast group II introns. This Ceratonia siliqua (Carob) protein is Maturase K.